Reading from the N-terminus, the 158-residue chain is Deoxyuridine 5'-triphosphate nucleotidohydrolase (158 aa).

Substrate is bound by residues 66–68 (RSG), Asn79, 83–85 (TID), and Lys93. The segment at 139–158 (RGFGSSGVARKGHYQGKPLA) is disordered.

The protein belongs to the dUTPase family. It depends on Mg(2+) as a cofactor.

It carries out the reaction dUTP + H2O = dUMP + diphosphate + H(+). The protein operates within pyrimidine metabolism; dUMP biosynthesis; dUMP from dCTP (dUTP route): step 2/2. This enzyme is involved in nucleotide metabolism: it produces dUMP, the immediate precursor of thymidine nucleotides and it decreases the intracellular concentration of dUTP so that uracil cannot be incorporated into DNA. This is Deoxyuridine 5'-triphosphate nucleotidohydrolase from Helicobacter hepaticus (strain ATCC 51449 / 3B1).